We begin with the raw amino-acid sequence, 463 residues long: Glycine--tRNA ligase (463 aa).

Residues arginine 100 and glutamate 175 each contribute to the substrate site. ATP contacts are provided by residues 207–209 (RNE), 217–222 (FRTREF), 291–292 (EL), and 335–338 (GADR). 222–226 (FEQME) contacts substrate. Residue 331–335 (EPSLG) coordinates substrate.

This sequence belongs to the class-II aminoacyl-tRNA synthetase family. In terms of assembly, homodimer.

The protein resides in the cytoplasm. The enzyme catalyses tRNA(Gly) + glycine + ATP = glycyl-tRNA(Gly) + AMP + diphosphate. In terms of biological role, catalyzes the attachment of glycine to tRNA(Gly). The protein is Glycine--tRNA ligase of Clostridium beijerinckii (strain ATCC 51743 / NCIMB 8052) (Clostridium acetobutylicum).